The primary structure comprises 290 residues: 33 kDa chaperonin (290 aa).

2 disulfides stabilise this stretch: Cys-235-Cys-237 and Cys-268-Cys-271.

Belongs to the HSP33 family. Post-translationally, under oxidizing conditions two disulfide bonds are formed involving the reactive cysteines. Under reducing conditions zinc is bound to the reactive cysteines and the protein is inactive.

The protein localises to the cytoplasm. In terms of biological role, redox regulated molecular chaperone. Protects both thermally unfolding and oxidatively damaged proteins from irreversible aggregation. Plays an important role in the bacterial defense system toward oxidative stress. The polypeptide is 33 kDa chaperonin (Streptococcus uberis (strain ATCC BAA-854 / 0140J)).